A 434-amino-acid polypeptide reads, in one-letter code: GTPase Obg (434 aa).

Residues 1 to 158 form the Obg domain; it reads MFLDTAKIKV…RELQLELKIL (158 aa). An OBG-type G domain is found at 159–336; it reads ADVGLVGFPS…LLDATAELLD (178 aa). GTP-binding positions include 165 to 172, 190 to 194, 212 to 215, 282 to 285, and 317 to 319; these read GFPSVGKS, FTTIV, DLPG, NKMD, and SGL. Residues Ser-172 and Thr-192 each coordinate Mg(2+). Residues 356–434 form the OCT domain; it reads GFDEEEKAFE…IGKFEFEFVD (79 aa).

It belongs to the TRAFAC class OBG-HflX-like GTPase superfamily. OBG GTPase family. Monomer. Mg(2+) serves as cofactor.

The protein localises to the cytoplasm. An essential GTPase which binds GTP, GDP and possibly (p)ppGpp with moderate affinity, with high nucleotide exchange rates and a fairly low GTP hydrolysis rate. Plays a role in control of the cell cycle, stress response, ribosome biogenesis and in those bacteria that undergo differentiation, in morphogenesis control. This is GTPase Obg from Streptococcus pneumoniae (strain Hungary19A-6).